Reading from the N-terminus, the 499-residue chain is Tetrathionate hydrolase (499 aa).

Residues methionine 1 to alanine 32 form the signal peptide.

It belongs to the tetrathionate hydrolase family. In terms of assembly, homodimer.

It is found in the cell membrane. The catalysed reaction is tetrathionate + H2O = sulfur + thiosulfate + sulfate + H(+). Functionally, catalyzes the hydrolysis of tetrathionate to generate elemental sulfur, thiosulfate and sulfate. This is Tetrathionate hydrolase from Acidithiobacillus ferrooxidans (strain ATCC 23270 / DSM 14882 / CIP 104768 / NCIMB 8455) (Ferrobacillus ferrooxidans (strain ATCC 23270)).